The sequence spans 312 residues: DNA-directed RNA polymerase subunit alpha (312 aa).

Residues 1 to 226 are alpha N-terminal domain (alpha-NTD); sequence MIEFEKPIIT…EHLNLFTDLT (226 aa). The alpha C-terminal domain (alpha-CTD) stretch occupies residues 243-312; the sequence is DEKVLDRTIE…DLGLGLKNDK (70 aa).

Belongs to the RNA polymerase alpha chain family. In terms of assembly, homodimer. The RNAP catalytic core consists of 2 alpha, 1 beta, 1 beta' and 1 omega subunit. When a sigma factor is associated with the core the holoenzyme is formed, which can initiate transcription.

It carries out the reaction RNA(n) + a ribonucleoside 5'-triphosphate = RNA(n+1) + diphosphate. DNA-dependent RNA polymerase catalyzes the transcription of DNA into RNA using the four ribonucleoside triphosphates as substrates. This is DNA-directed RNA polymerase subunit alpha from Streptococcus mutans serotype c (strain ATCC 700610 / UA159).